The primary structure comprises 842 residues: Envelope glycoprotein gp160 (842 aa).

The N-terminal stretch at 1–23 (MGMKSGWLLFYLLVSLIKVIGSE) is a signal peptide. Residues 24 to 663 (QHWVTVYYGV…ITKWLWYIKI (640 aa)) are Extracellular-facing. Residues cysteine 45 and cysteine 65 are joined by a disulfide bond. N-linked (GlcNAc...) asparagine; by host glycans are attached at residues asparagine 79, asparagine 123, asparagine 131, asparagine 134, asparagine 149, asparagine 153, asparagine 181, asparagine 190, asparagine 225, asparagine 229, asparagine 234, asparagine 255, asparagine 267, asparagine 278, asparagine 284, asparagine 290, asparagine 320, asparagine 331, and asparagine 345. Intrachain disulfides connect cysteine 110-cysteine 198, cysteine 117-cysteine 189, cysteine 122-cysteine 150, cysteine 211-cysteine 240, and cysteine 221-cysteine 232. The tract at residues 122 to 149 (CNDSYGEERNNTNMTTREPDIGYKQMKN) is V1. A V2 region spans residues 150–189 (CSFNATTELTDKKKQVYSLFYVEDVVPINAYNKTYRLINC). Residues 285 to 318 (CTRPGNNTGGQVQIGPAMTFYNIEKIVGDIRQAY) are V3. Cysteine 285 and cysteine 319 are oxidised to a cystine. Residues 353–363 (RNEGDLEVTHL) are CD4-binding loop. 2 disulfide bridges follow: cysteine 367–cysteine 423 and cysteine 374–cysteine 396. A V4 region spans residues 374–396 (CNTSKLFNEELLNETGEPITLPC). N-linked (GlcNAc...) asparagine; by host glycosylation is found at asparagine 375, asparagine 386, asparagine 422, and asparagine 426. V5 regions lie at residues 439–448 (DTKETIVYPS) and 441–448 (KETIVYPS). A fusion peptide region spans residues 489-510 (AAFGLGALFLGFLGAAGSTMGA). An immunosuppression region spans residues 552 to 570 (KQLQAKVLAIERYLRDQQI). A disulfide bridge connects residues cysteine 576 and cysteine 582. Asparagine 589, asparagine 594, asparagine 595, asparagine 604, and asparagine 616 each carry an N-linked (GlcNAc...) asparagine; by host glycan. Residues 612-646 (EKVRNYSGVIFGLIEQAQEQQNTNEKSLLELDQWD) are a coiled coil. The segment at 641-662 (ELDQWDSLWSWFGITKWLWYIK) is MPER; binding to GalCer. The helical transmembrane segment at 664–684 (AIMIVAGIVGIRIISIVITII) threads the bilayer. The Cytoplasmic segment spans residues 685 to 842 (ARVRQGYSPL…IRQGLERALI (158 aa)). The short motif at 691 to 694 (YSPL) is the YXXL motif; contains endocytosis signal element.

It belongs to the HIV-1 env protein family. In terms of assembly, the mature envelope protein (Env) consists of a homotrimer of non-covalently associated gp120-gp41 heterodimers. The resulting complex protrudes from the virus surface as a spike. There seems to be as few as 10 spikes on the average virion. Interacts with host CD4, CCR5 and CXCR4. Gp120 also interacts with the C-type lectins CD209/DC-SIGN and CLEC4M/DC-SIGNR (collectively referred to as DC-SIGN(R)). Gp120 and gp41 interact with GalCer. Gp120 interacts with host ITGA4/ITGB7 complex; on CD4+ T-cells, this interaction results in rapid activation of integrin ITGAL/LFA-1, which facilitates efficient cell-to-cell spreading of HIV-1. Gp120 interacts with cell-associated heparan sulfate; this interaction increases virus infectivity on permissive cells and may be involved in infection of CD4- cells. The mature envelope protein (Env) consists of a homotrimer of non-covalently associated gp120-gp41 heterodimers. The resulting complex protrudes from the virus surface as a spike. There seems to be as few as 10 spikes on the average virion. In terms of processing, highly glycosylated by host. The high number of glycan on the protein is reffered to as 'glycan shield' because it contributes to hide protein sequence from adaptive immune system. Palmitoylation of the transmembrane protein and of Env polyprotein (prior to its proteolytic cleavage) is essential for their association with host cell membrane lipid rafts. Palmitoylation is therefore required for envelope trafficking to classical lipid rafts, but not for viral replication. Post-translationally, specific enzymatic cleavages in vivo yield mature proteins. Envelope glycoproteins are synthesized as an inactive precursor that is heavily N-glycosylated and processed likely by host cell furin in the Golgi to yield the mature SU and TM proteins. The cleavage site between SU and TM requires the minimal sequence [KR]-X-[KR]-R. About 2 of the 9 disulfide bonds of gp41 are reduced by P4HB/PDI, following binding to CD4 receptor.

The protein localises to the virion membrane. The protein resides in the host cell membrane. Its subcellular location is the host endosome membrane. In terms of biological role, oligomerizes in the host endoplasmic reticulum into predominantly trimers. In a second time, gp160 transits in the host Golgi, where glycosylation is completed. The precursor is then proteolytically cleaved in the trans-Golgi and thereby activated by cellular furin or furin-like proteases to produce gp120 and gp41. Functionally, attaches the virus to the host lymphoid cell by binding to the primary receptor CD4. This interaction induces a structural rearrangement creating a high affinity binding site for a chemokine coreceptor like CXCR4 and/or CCR5. Acts as a ligand for CD209/DC-SIGN and CLEC4M/DC-SIGNR, which are respectively found on dendritic cells (DCs), and on endothelial cells of liver sinusoids and lymph node sinuses. These interactions allow capture of viral particles at mucosal surfaces by these cells and subsequent transmission to permissive cells. HIV subverts the migration properties of dendritic cells to gain access to CD4+ T-cells in lymph nodes. Virus transmission to permissive T-cells occurs either in trans (without DCs infection, through viral capture and transmission), or in cis (following DCs productive infection, through the usual CD4-gp120 interaction), thereby inducing a robust infection. In trans infection, bound virions remain infectious over days and it is proposed that they are not degraded, but protected in non-lysosomal acidic organelles within the DCs close to the cell membrane thus contributing to the viral infectious potential during DCs' migration from the periphery to the lymphoid tissues. On arrival at lymphoid tissues, intact virions recycle back to DCs' cell surface allowing virus transmission to CD4+ T-cells. Acts as a class I viral fusion protein. Under the current model, the protein has at least 3 conformational states: pre-fusion native state, pre-hairpin intermediate state, and post-fusion hairpin state. During fusion of viral and target intracellular membranes, the coiled coil regions (heptad repeats) assume a trimer-of-hairpins structure, positioning the fusion peptide in close proximity to the C-terminal region of the ectodomain. The formation of this structure appears to drive apposition and subsequent fusion of viral and target cell membranes. Complete fusion occurs in host cell endosomes and is dynamin-dependent, however some lipid transfer might occur at the plasma membrane. The virus undergoes clathrin-dependent internalization long before endosomal fusion, thus minimizing the surface exposure of conserved viral epitopes during fusion and reducing the efficacy of inhibitors targeting these epitopes. Membranes fusion leads to delivery of the nucleocapsid into the cytoplasm. This Human immunodeficiency virus type 1 group N (isolate YBF30) (HIV-1) protein is Envelope glycoprotein gp160.